The chain runs to 288 residues: Polyketide biosynthesis malonyl CoA-acyl carrier protein transacylase PksC (288 aa).

Residues Ser87 and His193 contribute to the active site.

Belongs to the FabD family.

Its subcellular location is the cytoplasm. It carries out the reaction holo-[ACP] + malonyl-CoA = malonyl-[ACP] + CoA. It functions in the pathway antibiotic biosynthesis; bacillaene biosynthesis. Its function is as follows. Involved in some intermediate steps for the synthesis of the antibiotic polyketide bacillaene which is involved in secondary metabolism. It catalyzes the transfer of the malonyl-CoA group to the acyl-carrier-protein AcpK (Mal-AcpK). In Bacillus subtilis (strain 168), this protein is Polyketide biosynthesis malonyl CoA-acyl carrier protein transacylase PksC (pksC).